Consider the following 421-residue polypeptide: Glycosaminoglycan xylosylkinase homolog (421 aa).

Residues 1–21 (MNKRSVIIAGIVASLLGLALG) form the signal peptide. Asn-83 is a glycosylation site (N-linked (GlcNAc...) asparagine). Gln-131 and Lys-147 together coordinate ATP. Asp-166 is a Mn(2+) binding site. 2 disulfides stabilise this stretch: Cys-225–Cys-240 and Cys-230–Cys-233. 252-255 (IYIV) provides a ligand contact to ATP. 2 disulfides stabilise this stretch: Cys-285–Cys-351 and Cys-352–Cys-409. Asp-314 is an active-site residue. 2 residues coordinate ATP: Glu-319 and Asp-329. Position 329 (Asp-329) interacts with Mn(2+).

The protein belongs to the FAM20 family. Requires Mn(2+) as cofactor.

It is found in the golgi apparatus. It localises to the endoplasmic reticulum. The catalysed reaction is 3-O-(beta-D-galactosyl-(1-&gt;3)-beta-D-galactosyl-(1-&gt;4)-beta-D-xylosyl)-L-seryl-[protein] + ATP = 3-O-(beta-D-galactosyl-(1-&gt;3)-beta-D-galactosyl-(1-&gt;4)-beta-D-2-O-phosphoxylosyl)-L-seryl-[protein] + ADP + H(+). Functionally, kylose kinase that mediates the 2-O-phosphorylation of xylose in the glycosaminoglycan-protein linkage region of proteoglycans. The protein is Glycosaminoglycan xylosylkinase homolog of Drosophila melanogaster (Fruit fly).